A 604-amino-acid polypeptide reads, in one-letter code: Elongation factor 4 (604 aa).

Positions 7–189 (SKIRNFCIIA…SIVHLVPPPS (183 aa)) constitute a tr-type G domain. GTP is bound by residues 19-24 (DHGKST) and 136-139 (NKID).

Belongs to the TRAFAC class translation factor GTPase superfamily. Classic translation factor GTPase family. LepA subfamily.

It is found in the cell inner membrane. The enzyme catalyses GTP + H2O = GDP + phosphate + H(+). Its function is as follows. Required for accurate and efficient protein synthesis under certain stress conditions. May act as a fidelity factor of the translation reaction, by catalyzing a one-codon backward translocation of tRNAs on improperly translocated ribosomes. Back-translocation proceeds from a post-translocation (POST) complex to a pre-translocation (PRE) complex, thus giving elongation factor G a second chance to translocate the tRNAs correctly. Binds to ribosomes in a GTP-dependent manner. The sequence is that of Elongation factor 4 from Synechococcus elongatus (strain ATCC 33912 / PCC 7942 / FACHB-805) (Anacystis nidulans R2).